Here is a 472-residue protein sequence, read N- to C-terminus: Ras-GEF domain-containing family member 1B (472 aa).

The 131-residue stretch at 34–164 folds into the N-terminal Ras-GEF domain; sequence QDNNLLSGSL…IIQNLIRKLA (131 aa). A Ras-GEF domain is found at 204-452; it reads DPYTVAQQLT…YLASYESEGP (249 aa).

Guanine nucleotide exchange factor (GEF) with specificity for rap2a and other Ras family proteins (in vitro). The polypeptide is Ras-GEF domain-containing family member 1B (rasgef1b) (Xenopus tropicalis (Western clawed frog)).